Consider the following 285-residue polypeptide: MKDYVGAHMSIAGGIHNAPERGVKAGCGVIQLFTQNTNQWRGKLISDPDILLFKEKLAESGLNEVISHDIYLINLASAPGEIRDKSLNGFQEEMIRCSRLGIGKIVMHPGSHNGDGEEVGLRRIIEAFDYLIAETPAYSGKILLETTAGQGTNLGYTFEHLRTIIEGSAHPDRFGVCYDTCHTFAAGYDITSAAAYGQVWEEFDRIIGLDRLQCFHFNDSKKGLNCRIDRHEHIGKGAIGATAFSLIMNDPRFAGIPKILETPKGDNNEMDEINLKLLRDMVKQR.

Histidine 68, histidine 108, glutamate 145, aspartate 179, histidine 182, histidine 216, aspartate 229, histidine 231, and glutamate 261 together coordinate Zn(2+).

Belongs to the AP endonuclease 2 family. Requires Zn(2+) as cofactor.

It carries out the reaction Endonucleolytic cleavage to 5'-phosphooligonucleotide end-products.. Functionally, endonuclease IV plays a role in DNA repair. It cleaves phosphodiester bonds at apurinic or apyrimidinic (AP) sites, generating a 3'-hydroxyl group and a 5'-terminal sugar phosphate. The protein is Probable endonuclease 4 of Geotalea daltonii (strain DSM 22248 / JCM 15807 / FRC-32) (Geobacter daltonii).